The chain runs to 366 residues: tRNA/tmRNA (uracil-C(5))-methyltransferase (366 aa).

The S-adenosyl-L-methionine site is built by Gln-190, Tyr-218, Asn-223, Glu-239, and Asp-299. Cys-324 functions as the Nucleophile in the catalytic mechanism. The active-site Proton acceptor is Glu-358.

The protein belongs to the class I-like SAM-binding methyltransferase superfamily. RNA M5U methyltransferase family. TrmA subfamily.

The catalysed reaction is uridine(54) in tRNA + S-adenosyl-L-methionine = 5-methyluridine(54) in tRNA + S-adenosyl-L-homocysteine + H(+). The enzyme catalyses uridine(341) in tmRNA + S-adenosyl-L-methionine = 5-methyluridine(341) in tmRNA + S-adenosyl-L-homocysteine + H(+). Its function is as follows. Dual-specificity methyltransferase that catalyzes the formation of 5-methyluridine at position 54 (m5U54) in all tRNAs, and that of position 341 (m5U341) in tmRNA (transfer-mRNA). This chain is tRNA/tmRNA (uracil-C(5))-methyltransferase, found in Escherichia fergusonii (strain ATCC 35469 / DSM 13698 / CCUG 18766 / IAM 14443 / JCM 21226 / LMG 7866 / NBRC 102419 / NCTC 12128 / CDC 0568-73).